Consider the following 353-residue polypeptide: Uroporphyrinogen decarboxylase (353 aa).

Residues 27–31, phenylalanine 46, aspartate 76, tyrosine 152, serine 207, and histidine 321 each bind substrate; that span reads RQAGR.

The protein belongs to the uroporphyrinogen decarboxylase family. Homodimer.

The protein localises to the cytoplasm. It catalyses the reaction uroporphyrinogen III + 4 H(+) = coproporphyrinogen III + 4 CO2. Its pathway is porphyrin-containing compound metabolism; protoporphyrin-IX biosynthesis; coproporphyrinogen-III from 5-aminolevulinate: step 4/4. Catalyzes the decarboxylation of four acetate groups of uroporphyrinogen-III to yield coproporphyrinogen-III. This Listeria monocytogenes serotype 4b (strain CLIP80459) protein is Uroporphyrinogen decarboxylase.